Here is a 126-residue protein sequence, read N- to C-terminus: Large ribosomal subunit protein bL17 (126 aa).

It belongs to the bacterial ribosomal protein bL17 family. As to quaternary structure, part of the 50S ribosomal subunit. Contacts protein L32.

The polypeptide is Large ribosomal subunit protein bL17 (Xylella fastidiosa (strain Temecula1 / ATCC 700964)).